A 355-amino-acid chain; its full sequence is MESCFQGDSRKSYSLSELAEILGAAVRGDPAIRIRGVNSLEDALPDELSFITDVRYKPLLSKCRAAAIIVSPALAELEFPLLVAERPYVVFARAAQLFAEPPFLAPGVHPGAYIGPNVHLGEGVSVGPQAHIGEDCVVGPGTRIYGSAYLGPGVRVGENCMLYPGAVILDRCLLGNRVTVHSGTVVGSDGFGYAQDEKGRHVKIPQTGIVQIDDDVEIGANCTVDRATFGRTWVRRGAKIDNQVQIAHNVVIGEHAILVAQVGISGSTTLGSHVVLAGQVGVAGHIEIGDRARVGAKSGVHHSVGAGEDILGIPGVPAREWKRTYANIQRLARFREELRLLVEKVQRIEKALDGE.

Residue H248 is the Proton acceptor of the active site.

It belongs to the transferase hexapeptide repeat family. LpxD subfamily. Homotrimer.

The enzyme catalyses a UDP-3-O-[(3R)-3-hydroxyacyl]-alpha-D-glucosamine + a (3R)-hydroxyacyl-[ACP] = a UDP-2-N,3-O-bis[(3R)-3-hydroxyacyl]-alpha-D-glucosamine + holo-[ACP] + H(+). The protein operates within bacterial outer membrane biogenesis; LPS lipid A biosynthesis. In terms of biological role, catalyzes the N-acylation of UDP-3-O-acylglucosamine using 3-hydroxyacyl-ACP as the acyl donor. Is involved in the biosynthesis of lipid A, a phosphorylated glycolipid that anchors the lipopolysaccharide to the outer membrane of the cell. This chain is UDP-3-O-acylglucosamine N-acyltransferase, found in Syntrophobacter fumaroxidans (strain DSM 10017 / MPOB).